Here is a 68-residue protein sequence, read N- to C-terminus: Palustrin-1c (68 aa).

Residues 1–22 (MFTMKKSLLLLFFLGTISLSLC) form the signal peptide. A propeptide spanning residues 23-39 (EEERGADEEEGDGEKLT) is cleaved from the precursor. A disulfide bridge links cysteine 62 with cysteine 68.

As to expression, expressed by the skin glands.

The protein resides in the secreted. Functionally, antimicrobial peptide. In Odorrana versabilis (Chinese bamboo leaf odorous frog), this protein is Palustrin-1c.